A 128-amino-acid chain; its full sequence is Fluoride-specific ion channel FluC (128 aa).

4 helical membrane passes run I5–G25, L35–F55, L67–V87, and F96–L116. Residues G75 and T78 each coordinate Na(+).

This sequence belongs to the fluoride channel Fluc/FEX (TC 1.A.43) family.

It is found in the cell inner membrane. The enzyme catalyses fluoride(in) = fluoride(out). Na(+) is not transported, but it plays an essential structural role and its presence is essential for fluoride channel function. Functionally, fluoride-specific ion channel. Important for reducing fluoride concentration in the cell, thus reducing its toxicity. The polypeptide is Fluoride-specific ion channel FluC (Burkholderia mallei (strain NCTC 10247)).